The primary structure comprises 322 residues: Large ribosomal subunit protein uL29m (322 aa).

Residues 1-44 (MLNVQRGLHTTVRLSARTKYTKPKPKPQARVIKSEPSQVTHHDN) form a disordered region.

The protein belongs to the universal ribosomal protein uL29 family. As to quaternary structure, component of the mitochondrial large ribosomal subunit. Mature mitochondrial ribosomes consist of a small (37S) and a large (54S) subunit. The 37S subunit contains at least 33 different proteins and 1 molecule of RNA (15S). The 54S subunit contains at least 45 different proteins and 1 molecule of RNA (21S).

It localises to the mitochondrion. The polypeptide is Large ribosomal subunit protein uL29m (MRPL4) (Vanderwaltozyma polyspora (strain ATCC 22028 / DSM 70294 / BCRC 21397 / CBS 2163 / NBRC 10782 / NRRL Y-8283 / UCD 57-17) (Kluyveromyces polysporus)).